The sequence spans 353 residues: Ribosomal RNA large subunit methyltransferase M (353 aa).

Residues serine 179, 212–215 (APGG), aspartate 231, aspartate 251, and aspartate 267 contribute to the S-adenosyl-L-methionine site. Lysine 296 functions as the Proton acceptor in the catalytic mechanism.

The protein belongs to the class I-like SAM-binding methyltransferase superfamily. RNA methyltransferase RlmE family. RlmM subfamily. In terms of assembly, monomer.

The protein resides in the cytoplasm. The catalysed reaction is cytidine(2498) in 23S rRNA + S-adenosyl-L-methionine = 2'-O-methylcytidine(2498) in 23S rRNA + S-adenosyl-L-homocysteine + H(+). Functionally, catalyzes the 2'-O-methylation at nucleotide C2498 in 23S rRNA. This Laribacter hongkongensis (strain HLHK9) protein is Ribosomal RNA large subunit methyltransferase M.